We begin with the raw amino-acid sequence, 679 residues long: Probable metal-nicotianamine transporter YSL18 (679 aa).

Basic and acidic residues predominate over residues 1–17; the sequence is MESVGDPRDGPSTERAF. A disordered region spans residues 1-21; that stretch reads MESVGDPRDGPSTERAFEGQP. 14 helical membrane-spanning segments follow: residues 29 to 49, 51 to 71, 101 to 121, 144 to 164, 211 to 231, 255 to 275, 309 to 329, 379 to 399, 407 to 427, 441 to 461, 497 to 517, 547 to 567, 593 to 613, and 627 to 647; these read VTLRAVVASVALGVALSSVMM, LVFTSGIIPSLNISAGLLGFF, CVVACASMTYSGGFGSYLLAM, FGRMMAFFFLVSFVGLLAIVP, LASLFWSIFQWFYTGGPNCGF, VGIGMISPHLINVSMLFGSII, VFCAIAMILGDGIFQLVAISL, FAISGYVVLATVSTVVIPLMY, VAAAYAFAPVLAFCNAYGTGV, ILMFASWIGIKNGGIVGSLVI, VIGTAMGCVVNPAVFTVFHHF, LPKYCLAISATFFVLALAVCA, FLLVPAVSIDMCIGSLIVFLW, and VLASGLICGDGLFSIPYALLA.

Belongs to the YSL (TC 2.A.67.2) family.

The protein localises to the membrane. In terms of biological role, may be involved in the transport of nicotianamine-chelated metals. In Oryza sativa subsp. japonica (Rice), this protein is Probable metal-nicotianamine transporter YSL18 (YSL18).